We begin with the raw amino-acid sequence, 688 residues long: Glycine--tRNA ligase beta subunit (688 aa).

It belongs to the class-II aminoacyl-tRNA synthetase family. In terms of assembly, tetramer of two alpha and two beta subunits.

It localises to the cytoplasm. The enzyme catalyses tRNA(Gly) + glycine + ATP = glycyl-tRNA(Gly) + AMP + diphosphate. The sequence is that of Glycine--tRNA ligase beta subunit from Desulforudis audaxviator (strain MP104C).